The primary structure comprises 782 residues: Coiled-coil alpha-helical rod protein 1 (782 aa).

2 stretches are compositionally biased toward basic and acidic residues: residues 62–74 (ERDV…EPGR) and 208–218 (ETRRAGEAKEL). Disordered regions lie at residues 62-82 (ERDV…WGLE) and 177-218 (EQLS…AKEL). 3 coiled-coil regions span residues 111–303 (LRET…SLTH), 344–437 (LMVQ…NAVS), and 498–691 (VTDV…QQEG).

As to expression, found in all tissues tested, abundantly expressed in heart, liver, skeletal muscle, kidney and pancreas, and to a lesser extent in lung and placenta. Overexpressed in keratinocytes of psoriatic lesions.

It is found in the cytoplasm. Its subcellular location is the nucleus. May be a regulator of keratinocyte proliferation or differentiation. This is Coiled-coil alpha-helical rod protein 1 (CCHCR1) from Homo sapiens (Human).